The sequence spans 373 residues: Zinc finger protein CONSTANS-LIKE 10 (373 aa).

Zn(2+)-binding residues include Cys-5, Cys-8, Cys-28, His-33, Cys-48, Cys-51, Cys-71, and His-76. The B box-type 1; atypical zinc-finger motif lies at Cys-5–Val-47. A B box-type 2; atypical zinc finger spans residues Cys-48–Ile-92. The segment at Pro-152–Met-172 is disordered. The region spanning Arg-316–Ser-358 is the CCT domain.

The protein belongs to the CONSTANS family.

The protein resides in the nucleus. In Arabidopsis thaliana (Mouse-ear cress), this protein is Zinc finger protein CONSTANS-LIKE 10 (COL10).